Consider the following 143-residue polypeptide: Glutaredoxin-2 (143 aa).

Residues 1–30 (METNFSFDSNLIVIIIITLFATRIIAKRFL) constitute a mitochondrion transit peptide. Residue Ser-37 is modified to Phosphoserine. Residues 41-143 (VAHVKDLIGQ…LAEILKPVFQ (103 aa)) enclose the Glutaredoxin domain. A glutathione-binding site is contributed by 58–63 (KTYCPY). Cys-61 is subject to S-glutathionyl cysteine; alternate. The cysteines at positions 61 and 64 are disulfide-linked. Ser-91 is modified (phosphoserine). Residues Val-109 and 122-123 (NS) each bind glutathione.

This sequence belongs to the glutaredoxin family.

The protein localises to the cytoplasm. It is found in the mitochondrion. The enzyme catalyses 2 glutathione + H2O2 = glutathione disulfide + 2 H2O. The catalysed reaction is 1-chloro-2,4-dinitrobenzene + glutathione = 2,4-dinitrophenyl-S-glutathione + chloride + H(+). It carries out the reaction RX + glutathione = an S-substituted glutathione + a halide anion + H(+). Functionally, component of the glutathione system which performs several activities such as glutathione-dependent oxidoreductase, glutathione peroxidase and glutathione S-transferase (GST) activity. The disulfide bond functions as an electron carrier in the glutathione-dependent synthesis of deoxyribonucleotides by the enzyme ribonucleotide reductase. In addition, it is also involved in reducing cytosolic protein- and non-protein-disulfides in a coupled system with glutathione reductase. Required for resistance to reactive oxygen species (ROS) by directly reducing hydroperoxides and for the detoxification of ROS-mediated damage. GRX2 is more active as an oxidoreductase than GRX1. Responsible for the S-glutathionylation of DHBP synthase. This Saccharomyces cerevisiae (strain ATCC 204508 / S288c) (Baker's yeast) protein is Glutaredoxin-2 (GRX2).